Consider the following 268-residue polypeptide: Phosphatidylglycerol--prolipoprotein diacylglyceryl transferase (268 aa).

The next 7 helical transmembrane spans lie at 14–34 (IIFS…LIGF), 60–80 (LLFN…VLFY), 95–115 (VWEG…AMLV), 124–144 (FWVV…MGRI), 176–196 (SQLY…NWFI), 203–223 (GSVA…VEFF), and 238–258 (ISMG…FIVL). Arg-143 serves as a coordination point for a 1,2-diacyl-sn-glycero-3-phospho-(1'-sn-glycerol).

The protein belongs to the Lgt family.

It is found in the cell inner membrane. The catalysed reaction is L-cysteinyl-[prolipoprotein] + a 1,2-diacyl-sn-glycero-3-phospho-(1'-sn-glycerol) = an S-1,2-diacyl-sn-glyceryl-L-cysteinyl-[prolipoprotein] + sn-glycerol 1-phosphate + H(+). It functions in the pathway protein modification; lipoprotein biosynthesis (diacylglyceryl transfer). Catalyzes the transfer of the diacylglyceryl group from phosphatidylglycerol to the sulfhydryl group of the N-terminal cysteine of a prolipoprotein, the first step in the formation of mature lipoproteins. This chain is Phosphatidylglycerol--prolipoprotein diacylglyceryl transferase, found in Mannheimia succiniciproducens (strain KCTC 0769BP / MBEL55E).